Consider the following 215-residue polypeptide: Cytochrome b6 (215 aa).

Residues 32 to 52 traverse the membrane as a helical segment; sequence IFYCLGGITLTCFLVQVATGF. Heme c is bound at residue cysteine 35. 2 residues coordinate heme b: histidine 86 and histidine 100. The next 3 helical transmembrane spans lie at 90–110, 116–136, and 186–206; these read ASMM…TGGF, LTWV…VTGY, and LHTF…FLMI. The heme b site is built by histidine 187 and histidine 202.

This sequence belongs to the cytochrome b family. PetB subfamily. In terms of assembly, the 4 large subunits of the cytochrome b6-f complex are cytochrome b6, subunit IV (17 kDa polypeptide, PetD), cytochrome f and the Rieske protein, while the 4 small subunits are PetG, PetL, PetM and PetN. The complex functions as a dimer. Heme b is required as a cofactor. It depends on heme c as a cofactor.

The protein localises to the plastid. Its subcellular location is the chloroplast thylakoid membrane. Its function is as follows. Component of the cytochrome b6-f complex, which mediates electron transfer between photosystem II (PSII) and photosystem I (PSI), cyclic electron flow around PSI, and state transitions. In Oenothera elata subsp. hookeri (Hooker's evening primrose), this protein is Cytochrome b6.